The primary structure comprises 699 residues: MTAIRGGSRRAPGLALALLGGVLLGACHGDENAQVNALPGFVSGSVRKTAYDGASDDLLTAGLGKTGLGSDTRPGFANPAQPSAAELRRLAIYSNYRALVDITPNGGYGRFWGPNVDLAGNDTLGEGKIAGTEYLAYSDDGSGRKNVTLLVQVPASFDPANPCIVTATASGSRGVYGAIAAAGEWGLKRGCAVAYNDKGGGNGAHEIGTGVVTLIDGTLATASSAGSSSLFTASESSSTLAAFNSAFPNRYAYKHAHSQQNPEQDWGRVTLQAVEFAYWALNEQFGPVVDGTRHGIRYRPGDITTIAASVSNGGGSALAAAEQDTRGWITAVVVGEPQINVRMTPGVTVEQGGAPVPSFGRPLADYATLANLLQPCAAAAVAATGAPYLSALPMGVTQSIRTQRCATLAAAGLVSGADTASQASDALAQLYAAGYLADSDLLQAPMWDSQAMPAIAVTYANAYTRSRVTDNLCNFSFATTNPVTGAVAAPAVSPMTNLFGAGNGVPPTNGINLVFNGASGGVDHRLATPDASFAGAFCLRQLWTANQLGIGTNVDAVRVAANLQHKPAIIVHGRSDALVPVNHASRAYVAQNSATEGRASQLSFYEVTNGQHFDAFLSVPGFDTRFVPVHYYDEQALNLMWNHLKSGAPLPPSQVIRTVPRGGVPGAAPALSTANLPPIVQSPGANAIAVNAGVIDVPL.

The signal sequence occupies residues 1 to 33 (MTAIRGGSRRAPGLALALLGGVLLGACHGDENA). Ser311 (charge relay system) is an active-site residue.

It belongs to the D-(-)-3-hydroxybutyrate oligomer hydrolase family.

The protein resides in the secreted. It carries out the reaction (3R)-hydroxybutanoate dimer + H2O = 2 (R)-3-hydroxybutanoate + H(+). Its pathway is lipid metabolism; butanoate metabolism. Its function is as follows. Participates in the degradation of poly-3-hydroxybutyrate (PHB). It works downstream of poly(3-hydroxybutyrate) depolymerase, hydrolyzing D(-)-3-hydroxybutyrate oligomers of various length (3HB-oligomers) into 3HB-monomers. In Burkholderia mallei (strain ATCC 23344), this protein is D-(-)-3-hydroxybutyrate oligomer hydrolase.